Consider the following 452-residue polypeptide: MKLKYFGTDGVRGIANETLTPELAFQLGRAGGYVLTKHAKDDEQPRVLVSRDTRISGQLLKHALISGLLSVGIEVMDMGIVTTPGVAYLVRKQEADAGVMITASHNPVQDNGIKFFGSDGYKLSDELEAEIEVLLDADKDNLPRPSSTGLGSVTDYPEGGLNYTAFLEQTIPDDLEGLHIAIDAANGATSSYVSQIFADLNTEFDTMATNPDGLNINAGVGSTHPEGLAKFVVEKGADMGVAFDGDGDRCIAVDELGNIVDGDKIMYICGKFLSERGRLKDDTVVTTVMSNLGLYKALEANDMHSVKTQVGDRYVVEEMLKDGYNLGGEQSGHIVFLDHNTTGDGMLTAIQLMYVVKQTGKKLSELAADVTTYPQKLVNVRVQDKKLALENQAIKDIIEKVENEMNGEGRVLVRPSGTEDLLRIMAEAPTKEAVGQYVDRIVAVVQSEVGVD.

The active-site Phosphoserine intermediate is Ser104. Mg(2+) is bound by residues Ser104, Asp244, Asp246, and Asp248. Residue Ser104 is modified to Phosphoserine.

Belongs to the phosphohexose mutase family. The cofactor is Mg(2+). Post-translationally, activated by phosphorylation.

The catalysed reaction is alpha-D-glucosamine 1-phosphate = D-glucosamine 6-phosphate. Catalyzes the conversion of glucosamine-6-phosphate to glucosamine-1-phosphate. In Pediococcus pentosaceus (strain ATCC 25745 / CCUG 21536 / LMG 10740 / 183-1w), this protein is Phosphoglucosamine mutase.